A 176-amino-acid polypeptide reads, in one-letter code: Cytochrome b (176 aa).

3 consecutive transmembrane segments (helical) span residues Phe-33–Met-53, Trp-77–Ile-98, and Trp-113–Leu-133. The heme b site is built by His-83 and His-97.

Belongs to the cytochrome b family. As to quaternary structure, the cytochrome bc1 complex contains 11 subunits: 3 respiratory subunits (MT-CYB, CYC1 and UQCRFS1), 2 core proteins (UQCRC1 and UQCRC2) and 6 low-molecular weight proteins (UQCRH/QCR6, UQCRB/QCR7, UQCRQ/QCR8, UQCR10/QCR9, UQCR11/QCR10 and a cleavage product of UQCRFS1). This cytochrome bc1 complex then forms a dimer. Heme b is required as a cofactor.

It is found in the mitochondrion inner membrane. Functionally, component of the ubiquinol-cytochrome c reductase complex (complex III or cytochrome b-c1 complex) that is part of the mitochondrial respiratory chain. The b-c1 complex mediates electron transfer from ubiquinol to cytochrome c. Contributes to the generation of a proton gradient across the mitochondrial membrane that is then used for ATP synthesis. The protein is Cytochrome b (MT-CYB) of Promops centralis (Big crested mastiff bat).